Reading from the N-terminus, the 141-residue chain is Putative antiporter subunit mnhB2 (141 aa).

4 consecutive transmembrane segments (helical) span residues 10–30 (TVTK…FFAG), 35–55 (GGGF…FLAF), 70–90 (ILMI…MFFG), and 114–134 (ITLF…TVML).

Belongs to the CPA3 antiporters (TC 2.A.63) subunit B family. In terms of assembly, may form a heterooligomeric complex that consists of seven subunits: mnhA2, mnhB2, mnhC2, mnhD2, mnhE2, mnhF2 and mnhG2.

It localises to the cell membrane. The polypeptide is Putative antiporter subunit mnhB2 (mnhB2) (Staphylococcus aureus (strain Mu3 / ATCC 700698)).